Consider the following 90-residue polypeptide: Large ribosomal subunit protein bL27 (90 aa).

Residues 1-20 are disordered; that stretch reads MAHKKAGGSSRNGRDSAGKR.

This sequence belongs to the bacterial ribosomal protein bL27 family.

This Rhodopseudomonas palustris (strain ATCC BAA-98 / CGA009) protein is Large ribosomal subunit protein bL27.